Consider the following 106-residue polypeptide: A-type ATP synthase subunit F (106 aa).

Belongs to the V-ATPase F subunit family. In terms of assembly, has multiple subunits with at least A(3), B(3), C, D, E, F, H, I and proteolipid K(x).

It localises to the cell membrane. Its function is as follows. Component of the A-type ATP synthase that produces ATP from ADP in the presence of a proton gradient across the membrane. The polypeptide is A-type ATP synthase subunit F (Methanothermobacter thermautotrophicus (strain ATCC 29096 / DSM 1053 / JCM 10044 / NBRC 100330 / Delta H) (Methanobacterium thermoautotrophicum)).